A 231-amino-acid polypeptide reads, in one-letter code: Cytochrome c oxidase subunit 2 (231 aa).

Over 1 to 14 the chain is Mitochondrial intermembrane; it reads MATPAQLGLQNATS. A helical membrane pass occupies residues 15–45; that stretch reads PIMEELIAFHDHALMIIFLISSLVLYIISLM. At 46-59 the chain is on the mitochondrial matrix side; it reads LTTKLTHTSTMNAQ. Residues 60 to 87 traverse the membrane as a helical segment; it reads EIEMIWTILPAIILIMIALPSLRILYMT. Over 88–231 the chain is Mitochondrial intermembrane; it reads DEFNKPYLTL…WASYLYIVSL (144 aa). Positions 161, 196, 198, 200, 204, and 207 each coordinate Cu cation. Mg(2+) is bound at residue Glu198.

This sequence belongs to the cytochrome c oxidase subunit 2 family. In terms of assembly, component of the cytochrome c oxidase (complex IV, CIV), a multisubunit enzyme composed of 14 subunits. The complex is composed of a catalytic core of 3 subunits MT-CO1, MT-CO2 and MT-CO3, encoded in the mitochondrial DNA, and 11 supernumerary subunits COX4I, COX5A, COX5B, COX6A, COX6B, COX6C, COX7A, COX7B, COX7C, COX8 and NDUFA4, which are encoded in the nuclear genome. The complex exists as a monomer or a dimer and forms supercomplexes (SCs) in the inner mitochondrial membrane with NADH-ubiquinone oxidoreductase (complex I, CI) and ubiquinol-cytochrome c oxidoreductase (cytochrome b-c1 complex, complex III, CIII), resulting in different assemblies (supercomplex SCI(1)III(2)IV(1) and megacomplex MCI(2)III(2)IV(2)). Found in a complex with TMEM177, COA6, COX18, COX20, SCO1 and SCO2. Interacts with TMEM177 in a COX20-dependent manner. Interacts with COX20. Interacts with COX16. Cu cation is required as a cofactor.

It localises to the mitochondrion inner membrane. The catalysed reaction is 4 Fe(II)-[cytochrome c] + O2 + 8 H(+)(in) = 4 Fe(III)-[cytochrome c] + 2 H2O + 4 H(+)(out). In terms of biological role, component of the cytochrome c oxidase, the last enzyme in the mitochondrial electron transport chain which drives oxidative phosphorylation. The respiratory chain contains 3 multisubunit complexes succinate dehydrogenase (complex II, CII), ubiquinol-cytochrome c oxidoreductase (cytochrome b-c1 complex, complex III, CIII) and cytochrome c oxidase (complex IV, CIV), that cooperate to transfer electrons derived from NADH and succinate to molecular oxygen, creating an electrochemical gradient over the inner membrane that drives transmembrane transport and the ATP synthase. Cytochrome c oxidase is the component of the respiratory chain that catalyzes the reduction of oxygen to water. Electrons originating from reduced cytochrome c in the intermembrane space (IMS) are transferred via the dinuclear copper A center (CU(A)) of subunit 2 and heme A of subunit 1 to the active site in subunit 1, a binuclear center (BNC) formed by heme A3 and copper B (CU(B)). The BNC reduces molecular oxygen to 2 water molecules using 4 electrons from cytochrome c in the IMS and 4 protons from the mitochondrial matrix. This is Cytochrome c oxidase subunit 2 (MT-CO2) from Aotus nigriceps (Black-headed night monkey).